Reading from the N-terminus, the 324-residue chain is Phospho-N-acetylmuramoyl-pentapeptide-transferase (324 aa).

The next 10 helical transmembrane spans lie at 5-25 (VILF…PILI), 50-70 (GTPT…TIVM), 77-97 (ISPE…LGFL), 117-137 (LIGQ…YNFA), 147-167 (LSFD…VGGS), 176-196 (LDGL…ILAW), 203-223 (VAIF…FNAH), 227-247 (VFMG…IAIL), 250-270 (LEIL…SVIL), and 302-322 (VVVT…YIEV).

It belongs to the glycosyltransferase 4 family. MraY subfamily. The cofactor is Mg(2+).

Its subcellular location is the cell membrane. The catalysed reaction is UDP-N-acetyl-alpha-D-muramoyl-L-alanyl-gamma-D-glutamyl-meso-2,6-diaminopimeloyl-D-alanyl-D-alanine + di-trans,octa-cis-undecaprenyl phosphate = di-trans,octa-cis-undecaprenyl diphospho-N-acetyl-alpha-D-muramoyl-L-alanyl-D-glutamyl-meso-2,6-diaminopimeloyl-D-alanyl-D-alanine + UMP. It participates in cell wall biogenesis; peptidoglycan biosynthesis. Functionally, catalyzes the initial step of the lipid cycle reactions in the biosynthesis of the cell wall peptidoglycan: transfers peptidoglycan precursor phospho-MurNAc-pentapeptide from UDP-MurNAc-pentapeptide onto the lipid carrier undecaprenyl phosphate, yielding undecaprenyl-pyrophosphoryl-MurNAc-pentapeptide, known as lipid I. The chain is Phospho-N-acetylmuramoyl-pentapeptide-transferase from Bacillus subtilis (strain 168).